Reading from the N-terminus, the 293-residue chain is Cytochrome c biogenesis protein CcsA (293 aa).

The next 8 membrane-spanning stretches (helical) occupy residues 12–32 (INIL…AKLT), 39–59 (VFSL…GMLL), 78–98 (LFLS…LSII), 99–119 (GAIG…ILPP), 142–162 (VMIF…IYVI), 216–236 (FISL…VWAN), 250–267 (TWAL…HIRI), and 273–293 (KIYA…VTWE).

This sequence belongs to the CcmF/CycK/Ccl1/NrfE/CcsA family. As to quaternary structure, may interact with Ccs1.

It is found in the plastid. It localises to the chloroplast thylakoid membrane. Required during biogenesis of c-type cytochromes (cytochrome c6 and cytochrome f) at the step of heme attachment. This is Cytochrome c biogenesis protein CcsA from Cyanidium caldarium (Red alga).